The following is a 489-amino-acid chain: Cysteine--tRNA ligase (489 aa).

Residue Cys27 coordinates Zn(2+). Positions 29–39 match the 'HIGH' region motif; sequence VTVYDLCHLGH. Positions 211, 236, and 240 each coordinate Zn(2+). Residues 268–272 carry the 'KMSKS' region motif; sequence KMSKS. An ATP-binding site is contributed by Lys271.

Belongs to the class-I aminoacyl-tRNA synthetase family. As to quaternary structure, monomer. It depends on Zn(2+) as a cofactor.

It localises to the cytoplasm. It catalyses the reaction tRNA(Cys) + L-cysteine + ATP = L-cysteinyl-tRNA(Cys) + AMP + diphosphate. This Prochlorococcus marinus (strain MIT 9215) protein is Cysteine--tRNA ligase.